We begin with the raw amino-acid sequence, 412 residues long: DNA replication and repair protein RecF (412 aa).

30–37 (GANGAGKT) lines the ATP pocket. A disordered region spans residues 369-412 (LQVRPGGGTAAVTPDPEYARGEATAANGAASAPTGADAASTSRD). A compositionally biased stretch (low complexity) spans 389-412 (GEATAANGAASAPTGADAASTSRD).

It belongs to the RecF family.

The protein resides in the cytoplasm. The RecF protein is involved in DNA metabolism; it is required for DNA replication and normal SOS inducibility. RecF binds preferentially to single-stranded, linear DNA. It also seems to bind ATP. The protein is DNA replication and repair protein RecF of Salinibacter ruber (strain DSM 13855 / M31).